Here is a 116-residue protein sequence, read N- to C-terminus: Ribonuclease P protein component (116 aa).

It belongs to the RnpA family. Consists of a catalytic RNA component (M1 or rnpB) and a protein subunit.

It catalyses the reaction Endonucleolytic cleavage of RNA, removing 5'-extranucleotides from tRNA precursor.. Its function is as follows. RNaseP catalyzes the removal of the 5'-leader sequence from pre-tRNA to produce the mature 5'-terminus. It can also cleave other RNA substrates such as 4.5S RNA. The protein component plays an auxiliary but essential role in vivo by binding to the 5'-leader sequence and broadening the substrate specificity of the ribozyme. The protein is Ribonuclease P protein component of Lachnoclostridium phytofermentans (strain ATCC 700394 / DSM 18823 / ISDg) (Clostridium phytofermentans).